A 180-amino-acid chain; its full sequence is Large ribosomal subunit protein uL5 (180 aa).

Belongs to the universal ribosomal protein uL5 family. As to quaternary structure, part of the 50S ribosomal subunit; part of the 5S rRNA/L5/L18/L25 subcomplex. Contacts the 5S rRNA and the P site tRNA. Forms a bridge to the 30S subunit in the 70S ribosome.

Its function is as follows. This is one of the proteins that bind and probably mediate the attachment of the 5S RNA into the large ribosomal subunit, where it forms part of the central protuberance. In the 70S ribosome it contacts protein S13 of the 30S subunit (bridge B1b), connecting the 2 subunits; this bridge is implicated in subunit movement. Contacts the P site tRNA; the 5S rRNA and some of its associated proteins might help stabilize positioning of ribosome-bound tRNAs. The sequence is that of Large ribosomal subunit protein uL5 from Ralstonia pickettii (strain 12J).